The primary structure comprises 242 residues: Cysteine-rich venom protein helothermine (242 aa).

The N-terminal stretch at 1–19 (MILLSLYLCLAAMLHQSEG) is a signal peptide. The 129-residue stretch at 41-169 (DKHNNLRRIV…TYKYYQVCQY (129 aa)) folds into the SCP domain. 8 disulfides stabilise this stretch: Cys77/Cys155, Cys94/Cys170, Cys150/Cys167, Cys189/Cys196, Cys192/Cys201, Cys205/Cys237, Cys214/Cys231, and Cys223/Cys235. The ShKT domain occupies 205 to 237 (CKQNDVYNNCPDLKKQVGCGHPIMKDCMATCKC).

Belongs to the CRISP family. Expressed by the venom gland.

The protein resides in the secreted. Functionally, alters a variety of ion channel activities, including voltage-gated potassium channels (Kv), voltage-gated calcium channels (L-, N-, and P-type) (Cav) and ryanodine receptors (RyR). Is toxic to mice (causes lethargy, partial paralysis of rear limbs and lowering of body temperature). The chain is Cysteine-rich venom protein helothermine from Heloderma horridum horridum (Mexican beaded lizard).